Reading from the N-terminus, the 418-residue chain is Nuclear hormone receptor family member nhr-209 (418 aa).

The nuclear receptor DNA-binding region spans proline 43–alanine 121. NR C4-type zinc fingers lie at residues cysteine 46–cysteine 66 and cysteine 82–cysteine 104. The region spanning threonine 174 to glutamate 414 is the NR LBD domain. The tract at residues glutamate 403–glutamate 414 is AF-2.

The protein belongs to the nuclear hormone receptor family.

It is found in the nucleus. Its function is as follows. Transcriptional regulator. Plays a role in modulation of lifespan and immunity. This is Nuclear hormone receptor family member nhr-209 from Caenorhabditis elegans.